We begin with the raw amino-acid sequence, 676 residues long: uncharacterized protein (676 aa).

This is an uncharacterized protein from Magallana gigas (Pacific oyster).